The following is a 251-amino-acid chain: MLLLISPDSVEEALDCAKAAEHLDIVDVKKPDEGSLGANFPWVIREIRDAVPADKPVSATVGDVPYKPGTVAQAALGAVVSGATYIKVGLYGCTTPDQGIEVMRAVVRAVKDHRPDALVVASGYADAHRIGCVNPLAVPDIAARSGADAAMLDTAIKDGTRLFDHVPPEVCAEFVRLAHTSGLLAALAGSVTQADLGPLTHMGTDIVGVRGAVCEGGDRNAGRIQPHLVAAFRAEMDRHAREHAVGVPAVN.

Lys-29 (schiff-base intermediate with substrate) is an active-site residue. Lys-87 (proton acceptor) is an active-site residue.

This sequence belongs to the MfnB family.

The catalysed reaction is 2 D-glyceraldehyde 3-phosphate = 4-(hydroxymethyl)-2-furancarboxaldehyde phosphate + phosphate + 2 H2O. In terms of biological role, catalyzes the formation of 4-(hydroxymethyl)-2-furancarboxaldehyde phosphate (4-HFC-P) from two molecules of glyceraldehyde-3-P (GA-3-P). In Kitasatospora aureofaciens (Streptomyces aureofaciens), this protein is Putative (5-formylfuran-3-yl)methyl phosphate synthase.